The sequence spans 387 residues: Alpha-sarcoglycan (387 aa).

Positions methionine 1–alanine 24 are cleaved as a signal peptide. Topologically, residues glutamine 25 to alanine 290 are extracellular. 2 N-linked (GlcNAc...) asparagine glycosylation sites follow: asparagine 174 and asparagine 246. Residues leucine 291 to isoleucine 311 form a helical membrane-spanning segment. Residues methionine 312 to histidine 387 are Cytoplasmic-facing. Position 377 is a phosphoserine (serine 377).

It belongs to the sarcoglycan alpha/epsilon family. As to quaternary structure, cross-link to form 2 major subcomplexes: one consisting of SGCB, SGCD and SGCG and the other consisting of SGCB and SGCD. The association between SGCB and SGCG is particularly strong while SGCA is loosely associated with the other sarcoglycans. Interacts with the syntrophin SNTA1.

The protein resides in the cell membrane. It is found in the sarcolemma. Its subcellular location is the cytoplasm. It localises to the cytoskeleton. In terms of biological role, component of the sarcoglycan complex, a subcomplex of the dystrophin-glycoprotein complex which forms a link between the F-actin cytoskeleton and the extracellular matrix. This chain is Alpha-sarcoglycan (SGCA), found in Oryctolagus cuniculus (Rabbit).